The sequence spans 123 residues: Small ribosomal subunit protein uS13 (123 aa).

Positions 95-123 (GLPVRGQKTKTNARTRKGPKRAISGKKNK) are disordered.

Belongs to the universal ribosomal protein uS13 family. As to quaternary structure, part of the 30S ribosomal subunit. Forms a loose heterodimer with protein S19. Forms two bridges to the 50S subunit in the 70S ribosome.

Located at the top of the head of the 30S subunit, it contacts several helices of the 16S rRNA. In the 70S ribosome it contacts the 23S rRNA (bridge B1a) and protein L5 of the 50S subunit (bridge B1b), connecting the 2 subunits; these bridges are implicated in subunit movement. Contacts the tRNAs in the A and P-sites. The sequence is that of Small ribosomal subunit protein uS13 from Clostridium novyi (strain NT).